The primary structure comprises 362 residues: Dihydroorotate dehydrogenase (quinone) (362 aa).

FMN-binding positions include 62–66 (AGYDK) and Thr-86. Position 66 (Lys-66) interacts with substrate. 111-115 (NRLGF) contacts substrate. Residues Asn-139 and Asn-170 each contribute to the FMN site. Residue Asn-170 participates in substrate binding. Ser-173 functions as the Nucleophile in the catalytic mechanism. Asn-175 contributes to the substrate binding site. FMN-binding residues include Lys-215 and Ser-243. 244-245 (NT) serves as a coordination point for substrate. FMN-binding positions include Gly-266, Gly-295, and 316 to 317 (YS).

The protein belongs to the dihydroorotate dehydrogenase family. Type 2 subfamily. As to quaternary structure, monomer. FMN is required as a cofactor.

It is found in the cell membrane. It catalyses the reaction (S)-dihydroorotate + a quinone = orotate + a quinol. It functions in the pathway pyrimidine metabolism; UMP biosynthesis via de novo pathway; orotate from (S)-dihydroorotate (quinone route): step 1/1. Functionally, catalyzes the conversion of dihydroorotate to orotate with quinone as electron acceptor. The polypeptide is Dihydroorotate dehydrogenase (quinone) (Sinorhizobium medicae (strain WSM419) (Ensifer medicae)).